Consider the following 736-residue polypeptide: Cytosolic neutral trehalase (736 aa).

The interval 1–47 is disordered; the sequence is MSEAPQARRVGSVDDHSVYDDAKTYYTSEERHNNSRSGPRQRTYSQN. Positions 11–33 are enriched in basic and acidic residues; the sequence is GSVDDHSVYDDAKTYYTSEERHN. A compositionally biased stretch (polar residues) spans 35–47; sequence SRSGPRQRTYSQN. Residues aspartate 92, aspartate 94, asparagine 96, glutamine 98, and aspartate 103 each coordinate Ca(2+). Residues arginine 279, 286–287, asparagine 323, 332–334, glutamate 399, arginine 448, and glycine 451 contribute to the substrate site; these read WD and RSQ. Catalysis depends on proton donor/acceptor residues aspartate 453 and glutamate 657.

The protein belongs to the glycosyl hydrolase 37 family. The cofactor is Ca(2+).

It localises to the cytoplasm. The catalysed reaction is alpha,alpha-trehalose + H2O = alpha-D-glucose + beta-D-glucose. It participates in carbohydrate degradation. Functionally, hydrolyzes intracellular trehalose to glucose. Plays a role in pathogenicity, specifically in proliferation of invasive hyphae in rice blast disease. The sequence is that of Cytosolic neutral trehalase (NTH1) from Pyricularia oryzae (strain 70-15 / ATCC MYA-4617 / FGSC 8958) (Rice blast fungus).